A 226-amino-acid polypeptide reads, in one-letter code: DNA mismatch repair protein MutH (226 aa).

This sequence belongs to the MutH family.

The protein resides in the cytoplasm. Sequence-specific endonuclease that cleaves unmethylated GATC sequences. It is involved in DNA mismatch repair. The sequence is that of DNA mismatch repair protein MutH from Actinobacillus pleuropneumoniae serotype 5b (strain L20).